Here is a 1507-residue protein sequence, read N- to C-terminus: DE-cadherin (1507 aa).

The signal sequence occupies residues 1-69 (MSTSVQRMSR…AISLLSPALA (69 aa)). A propeptide spanning residues 70-261 (LHSPPDKNFS…IYLKRPIDKR (192 aa)) is cleaved from the precursor. 7 Cadherin domains span residues 97-195 (VKEE…APAF), 204-301 (MSEN…PPSF), 311-412 (LKEN…IPYY), 420-522 (ILEN…KPHF), 532-633 (LLED…TILE), 631-733 (ILEE…APFL), and 741-835 (WQEN…NDNA). Over 262–1328 (PGQSYAIIVR…VAFSFGIDRN (1067 aa)) the chain is Extracellular. Residues asparagine 317, asparagine 466, and asparagine 552 are each glycosylated (N-linked (GlcNAc...) asparagine). Asparagine 766, asparagine 949, asparagine 983, asparagine 999, and asparagine 1073 each carry an N-linked (GlcNAc...) asparagine glycan. In terms of domain architecture, EGF-like spans 1084-1123 (VQAQCVCEAPLMRRCLNGGSPRYGENDVCDCIDGFTGPHC). Cystine bridges form between cysteine 1098–cysteine 1112 and cysteine 1114–cysteine 1123. Residues 1125–1313 (LVSVAFYGSG…SVFRNIDSGC (189 aa)) form the Laminin G-like domain. N-linked (GlcNAc...) asparagine glycosylation is found at asparagine 1145, asparagine 1274, and asparagine 1290. Cysteine 1287 and cysteine 1313 are oxidised to a cystine. Residues 1329–1349 (FIIAIIVCLALLLIILLAVVV) form a helical membrane-spanning segment. Residues 1350 to 1507 (QKKQKNGWHE…NVDDDQGWRI (158 aa)) are Cytoplasmic-facing. Residues 1350–1507 (QKKQKNGWHE…NVDDDQGWRI (158 aa)) form an interaction with Inx2 region. A disordered region spans residues 1488 to 1507 (YGEEPSDTDSNVDDDQGWRI). Serine 1493 carries the phosphoserine modification.

Interacts (via cytoplasmic region) with Inx2 (via cytoplasmic loop). Interacts with Hakai. Interacts with Myo31DF. Post-translationally, N-glycosylation is important for biosynthesis and function. As to expression, in early stage 9 and stage 10 oocytes, expressed in border cells, strongly expressed in polar cells and very weakly expressed in the nurse cells (at protein level). In the embryo, expressed in the leading edge cells of the dorsal epidermis (at protein level). Stage 10 embryos exhibit intense expression in epithelial cells. Stage 14 embryos show expression in the hindgut (at the apical poles of cell-cell boundaries), at the apical junctions of tracheal cells and in the dorsal longitudinal trunk. In stage 16 embryos the glial midline cells of the central nervous system show strong expression.

The protein resides in the cell membrane. Its subcellular location is the apical cell membrane. Functionally, cadherins are calcium-dependent cell adhesion proteins. In connecting cells they preferentially interact with themselves in a homophilic manner; cadherins may thus contribute to the sorting of heterogeneous cell types. During oogenesis, integral component of the guidance mechanisms that regulate the directional persistent collective migration of the border cell (BC) cluster through the nurse cells to the oocyte. Functions downstream of the two chemoattractant receptors, Pvr and Egfr, to promote BC adhesion between the leader cells of the migrating cluster and the surrounding nurse cells. This adhesion increases Rac1 signaling in the leading cells, which in turn stabilizes DE-cadherin/DE-cadherin adhesions through the formation of forward-directed protrusions which attach/detach to the surrounding nurse cells in order to pull the cluster through the egg chamber to the oocyte. Within the BC cluster, also promotes adhesion between BCs, and between BCs and polar cells which enables the lead BC to communicate direction to the other cells in the cluster, providing polarity to each individual cell and ensuring collective behavior. May function in cell intercalation in the lateral epidermis during germband extension. Contributes to the determination of body left-right asymmetry by enhancing Myo31DF activity and inhibiting Myo61F activity. This chain is DE-cadherin, found in Drosophila melanogaster (Fruit fly).